Here is an 85-residue protein sequence, read N- to C-terminus: UPF0512 protein U (85 aa).

Belongs to the UPF0512 family.

The sequence is that of UPF0512 protein U from Dictyostelium discoideum (Social amoeba).